The chain runs to 209 residues: MERTLWDISPALSTATPTWPGDTPFSQEIAWKLEGDCPVNVGRITLSPHTGAHADAPLHYHADGAPIGAVPLDAYLGPCRVIHCVGVARVEPEHVRDALDGAPPRVLLRTYARMPQNAWDDHFAAVAPETIGLLAAHGVRLIGTDTASLDPQTSKTMDAHHAVGRHGLAILEGLVLDDVPAGDYELIALPLKFATLDASPVRAVLRRLP.

Substrate is bound at residue tryptophan 19. Zn(2+)-binding residues include histidine 49, histidine 53, and aspartate 55. Histidine 59 serves as the catalytic Proton donor/acceptor. Zn(2+) contacts are provided by histidine 160 and glutamate 172.

This sequence belongs to the Cyclase 1 superfamily. KynB family. In terms of assembly, homodimer. The cofactor is Zn(2+).

The catalysed reaction is N-formyl-L-kynurenine + H2O = L-kynurenine + formate + H(+). It participates in amino-acid degradation; L-tryptophan degradation via kynurenine pathway; L-kynurenine from L-tryptophan: step 2/2. Functionally, catalyzes the hydrolysis of N-formyl-L-kynurenine to L-kynurenine, the second step in the kynurenine pathway of tryptophan degradation. In Ralstonia nicotianae (strain ATCC BAA-1114 / GMI1000) (Ralstonia solanacearum), this protein is Kynurenine formamidase.